We begin with the raw amino-acid sequence, 80 residues long: Small ribosomal subunit protein bS16 (80 aa).

This sequence belongs to the bacterial ribosomal protein bS16 family.

This is Small ribosomal subunit protein bS16 from Blochmanniella pennsylvanica (strain BPEN).